The primary structure comprises 305 residues: Ribonuclease BN (305 aa).

Residues His-64, His-66, Asp-68, His-69, His-141, Asp-212, and His-270 each coordinate Zn(2+). The active-site Proton acceptor is Asp-68.

It belongs to the RNase Z family. RNase BN subfamily. As to quaternary structure, homodimer. Requires Zn(2+) as cofactor.

Its function is as follows. Zinc phosphodiesterase, which has both exoribonuclease and endoribonuclease activities. The protein is Ribonuclease BN of Enterobacter sp. (strain 638).